Reading from the N-terminus, the 196-residue chain is CAG pathogenicity island protein 13 (196 aa).

The sequence is that of CAG pathogenicity island protein 13 (cagS) from Helicobacter pylori (strain ATCC 700392 / 26695) (Campylobacter pylori).